Consider the following 155-residue polypeptide: Acetylaranotin biosynthesis cluster protein L (155 aa).

It functions in the pathway mycotoxin biosynthesis. In terms of biological role, nonribosomal peptide synthetase; part of the gene cluster that mediates the biosynthesis of acetylaranotin, a member of the epipolythiodioxopiperazine (ETP) class of toxins characterized by a disulfide-bridged cyclic dipeptide. The first step of acetylaranotin biosynthesis is performed by the NRPS ataP which produces diketopiperazine cyclo-L-Phe-L-Phe via the condensation of 2 phenylalanines (L-Phe). The ataC domain of ataTC then catalyzes the formation of bishydroxylation of cyclo-L-Phe-L-Phe. The glutathione S-transferase domain ataG in ataIMG further catalyzes the conjugation of two glutathiones to the bishydroxylated intermediate. Next, the dipeptidase ataJ removes the Glu residues. The following step is performed by the carbon sulfur lyase domain ataI of ataIMG which may convert the bis-cysteinyl adduct to yield an epidithiol intermediate. The ataT domain from ataTC then catalyzes the oxidation of the free dithiols, followed by a cyclization step catalyzed by the cytochrome P450 ataF. AtaF probably acts as an epoxidase to promote a dual epoxidation formation at C8 and C9 along with C8' and C9', followed by the spontaneous nucleophilic attack of the amide nitrogens N10 and N10' to yield an intermediate with the pyrrolidine partial structure. The final steps of acetylaranotin biosynthesis involve the acetylation and ring rearrangement of an epitetrathiodiketopiperazine intermediate to produce acetylaranotin. AtaH probably catalyzes the acetylation of epitetrathiodiketopiperazine to produce a diacetate and ataY is responsible for the formation of the dihydrooxepin moiety that converts the diacetate intermediate to acetylaranotin via acetylapoaranotin. Both enzymes could function independently in the absence of the other. The specific function of ataL within the pathway has still to be determined. The acetylaranotin bis-thiomethyltransferase ataS located outside of acetylaranotin gene cluster is the main thiomethyltransferase responsible for converting acetylaranotin and its related intermediates to their methylated forms. This Aspergillus terreus (strain NIH 2624 / FGSC A1156) protein is Acetylaranotin biosynthesis cluster protein L.